The chain runs to 331 residues: Aspartate carbamoyltransferase catalytic subunit (331 aa).

Residues Arg-66 and Thr-67 each coordinate carbamoyl phosphate. Position 94 (Lys-94) interacts with L-aspartate. The carbamoyl phosphate site is built by Arg-116, His-149, and Gln-152. L-aspartate-binding residues include Arg-189 and Arg-243. Carbamoyl phosphate contacts are provided by Gly-284 and Pro-285.

This sequence belongs to the aspartate/ornithine carbamoyltransferase superfamily. ATCase family. In terms of assembly, heterododecamer (2C3:3R2) of six catalytic PyrB chains organized as two trimers (C3), and six regulatory PyrI chains organized as three dimers (R2).

It carries out the reaction carbamoyl phosphate + L-aspartate = N-carbamoyl-L-aspartate + phosphate + H(+). Its pathway is pyrimidine metabolism; UMP biosynthesis via de novo pathway; (S)-dihydroorotate from bicarbonate: step 2/3. Catalyzes the condensation of carbamoyl phosphate and aspartate to form carbamoyl aspartate and inorganic phosphate, the committed step in the de novo pyrimidine nucleotide biosynthesis pathway. This is Aspartate carbamoyltransferase catalytic subunit from Thermosynechococcus vestitus (strain NIES-2133 / IAM M-273 / BP-1).